A 430-amino-acid chain; its full sequence is Histidine--tRNA ligase, chloroplastic (430 aa).

This sequence belongs to the class-II aminoacyl-tRNA synthetase family.

It localises to the plastid. Its subcellular location is the chloroplast. It carries out the reaction tRNA(His) + L-histidine + ATP = L-histidyl-tRNA(His) + AMP + diphosphate + H(+). This is Histidine--tRNA ligase, chloroplastic (hisS) from Porphyra purpurea (Red seaweed).